A 368-amino-acid polypeptide reads, in one-letter code: Branched-chain-amino-acid aminotransferase (368 aa).

R101 contacts pyridoxal 5'-phosphate. K204 carries the N6-(pyridoxal phosphate)lysine modification. Pyridoxal 5'-phosphate contacts are provided by residues Y209 and 271 to 272 (IT). An Isoglutamyl lysine isopeptide (Lys-Gln) (interchain with Q-Cter in protein Pup) cross-link involves residue K299. Residue T314 coordinates pyridoxal 5'-phosphate.

This sequence belongs to the class-IV pyridoxal-phosphate-dependent aminotransferase family. As to quaternary structure, homodimer. It depends on pyridoxal 5'-phosphate as a cofactor.

The catalysed reaction is L-isoleucine + 2-oxoglutarate = (S)-3-methyl-2-oxopentanoate + L-glutamate. The enzyme catalyses L-valine + 2-oxoglutarate = 3-methyl-2-oxobutanoate + L-glutamate. It catalyses the reaction L-leucine + 2-oxoglutarate = 4-methyl-2-oxopentanoate + L-glutamate. It functions in the pathway amino-acid biosynthesis; L-isoleucine biosynthesis; L-isoleucine from 2-oxobutanoate: step 4/4. It participates in amino-acid biosynthesis; L-leucine biosynthesis; L-leucine from 3-methyl-2-oxobutanoate: step 4/4. Its pathway is amino-acid biosynthesis; L-valine biosynthesis; L-valine from pyruvate: step 4/4. Its activity is regulated as follows. Inhibited by ammonium sulfate at millimolar concentrations and by O-benzylhydroxylamine (Obe). Its function is as follows. Catalyzes the reversible transfers of an amino group from glutamate to the alpha-ketoacid of the respective amino acid in the final step in the biosynthesis of branchedchain amino acids. The amino acids can be ranked in the following order with respect to their efficiency as amino donor: Leu &gt; Ile &gt; Val. This Mycolicibacterium smegmatis (strain ATCC 700084 / mc(2)155) (Mycobacterium smegmatis) protein is Branched-chain-amino-acid aminotransferase (ilvE).